The chain runs to 2383 residues: Reducing polyketide synthase rdc5 (2383 aa).

One can recognise a Ketosynthase family 3 (KS3) domain in the interval 10–438 (RAPIAIIGMS…GTNAHLVLER (429 aa)). Residues Cys-186, His-321, and His-361 each act as for beta-ketoacyl synthase activity in the active site. Residues 550 to 881 (FVFTGQGAQW…GFAAELFRRG (332 aa)) are malonyl-CoA:ACP transacylase (MAT) domain. The N-terminal hotdog fold stretch occupies residues 930–1066 (KSLIGAERPS…GLFSINYEDS (137 aa)). A PKS/mFAS DH domain is found at 930-1253 (KSLIGAERPS…LAELEVEDAD (324 aa)). The tract at residues 932–1250 (LIGAERPSLD…DFHLAELEVE (319 aa)) is dehydratase (DH) domain. His-962 (proton acceptor; for dehydratase activity) is an active-site residue. The tract at residues 1094-1253 (VEVISKQAFY…LAELEVEDAD (160 aa)) is C-terminal hotdog fold. The active-site Proton donor; for dehydratase activity is the Asp-1160. Residues 1663–1977 (GLLNTLHFVS…QGKHVGKMIL (315 aa)) are enoyl reductase (ER) domain. Cys-1776 acts as the Phosphocysteine intermediate in catalysis. Positions 2002-2182 (ATYLFIGGLG…VSVNLGIMRD (181 aa)) are ketoreductase (KR) domain. Residues 2300–2377 (AAGPIITKAL…QFAVQIAKKS (78 aa)) form the Carrier domain. Position 2337 is an O-(pantetheine 4'-phosphoryl)serine (Ser-2337).

It participates in secondary metabolite biosynthesis. Its function is as follows. Reducing polyketide synthase; part of the gene cluster that mediates the biosynthesis of radicicol, a resorcylic acid lactone (RAL) that irreversibly inhibits the HSP90 molecular chaperone, an important target for cancer chemotherapy. The radicicol cluster encodes only two apparent post-PKS enzymes, a cytochrome P450 monooxygenase (rdc4) and a non-heme halogenase (rdc2) that could introduce the epoxide and the chlorine, respectively. If this cluster includes all the genes required for radicicol biosynthesis, the remaining structural features of radicicol are presumably generated by the PKSs rdc1 and rdc5. The C-2' ketone could arise if the R-PKS rdc5 and NR-PKS rdc1 each carry out four iterations, in contrast to the five iteration-three iteration split for the hypothemycin PKSs. The origin of the cis 5',6' double bond is not known. The radicicol R-PKS rdc5 ER domain may catalyze either double bond isomerization or reduction in the third iteration. This chain is Reducing polyketide synthase rdc5, found in Metacordyceps chlamydosporia (Nematophagous fungus).